A 215-amino-acid polypeptide reads, in one-letter code: Cytochrome b6 (215 aa).

Residues 32–52 (IFYCLGGITLTCFLIQVATGF) form a helical membrane-spanning segment. C35 contacts heme c. Heme b-binding residues include H86 and H100. The next 3 membrane-spanning stretches (helical) occupy residues 90–110 (ASMM…TGGF), 116–136 (LTWV…VTGY), and 186–206 (LHTF…FLMI). H187 and H202 together coordinate heme b.

Belongs to the cytochrome b family. PetB subfamily. In terms of assembly, the 4 large subunits of the cytochrome b6-f complex are cytochrome b6, subunit IV (17 kDa polypeptide, PetD), cytochrome f and the Rieske protein, while the 4 small subunits are PetG, PetL, PetM and PetN. The complex functions as a dimer. Requires heme b as cofactor. Heme c is required as a cofactor.

It is found in the plastid. The protein localises to the chloroplast thylakoid membrane. Functionally, component of the cytochrome b6-f complex, which mediates electron transfer between photosystem II (PSII) and photosystem I (PSI), cyclic electron flow around PSI, and state transitions. In Spirogyra maxima (Green alga), this protein is Cytochrome b6.